A 105-amino-acid polypeptide reads, in one-letter code: Cell division protein FtsL (105 aa).

The Cytoplasmic portion of the chain corresponds to 1–24 (MAEKMEKTGQILQMQLKRFSRVEK). The chain crosses the membrane as a helical span at residues 25–45 (AFYFSIAVTTLIVAISIIFMQ). Topologically, residues 46–105 (TKLLQVQNDLTKINAQIEEKKTELDDAKQEVNELLRAERLKEIANSHDLQLNNENIRIAE) are extracellular.

Belongs to the FtsL family.

It is found in the cell membrane. Essential cell division protein. This chain is Cell division protein FtsL, found in Streptococcus pneumoniae (strain ATCC BAA-255 / R6).